We begin with the raw amino-acid sequence, 398 residues long: Elongation factor Tu (398 aa).

One can recognise a tr-type G domain in the interval 10–207; that stretch reads KPHVNIGTIG…TVDSYIPEPE (198 aa). The interval 19-26 is G1; it reads GHVDHGKT. A GTP-binding site is contributed by 19–26; it reads GHVDHGKT. Threonine 26 is a binding site for Mg(2+). The G2 stretch occupies residues 63–67; it reads GITIN. The tract at residues 84–87 is G3; the sequence is DAPG. GTP contacts are provided by residues 84-88 and 139-142; these read DAPGH and NKVD. The tract at residues 139-142 is G4; it reads NKVD. The G5 stretch occupies residues 177–179; sequence SAL.

It belongs to the TRAFAC class translation factor GTPase superfamily. Classic translation factor GTPase family. EF-Tu/EF-1A subfamily. Monomer.

The protein localises to the cytoplasm. It catalyses the reaction GTP + H2O = GDP + phosphate + H(+). GTP hydrolase that promotes the GTP-dependent binding of aminoacyl-tRNA to the A-site of ribosomes during protein biosynthesis. In Streptococcus pyogenes serotype M1, this protein is Elongation factor Tu.